The sequence spans 416 residues: Choline/ethanolaminephosphotransferase 1 (416 aa).

Positions 1-20 (MSGHRSTRKRCGDSHPESPV) are disordered. Ser-18 carries the phosphoserine modification. Thr-40 bears the Phosphothreonine mark. CDP-choline is bound at residue Asn-86. Transmembrane regions (helical) follow at residues 89–108 (TIIGLSINICTTILLVFYCP) and 116–133 (LWAYIACACGLFIYQSLD). Asp-133 contributes to the Mg(2+) binding site. Asn-144 is a glycosylation site (N-linked (GlcNAc...) asparagine). A CDP-choline-binding site is contributed by Glu-151. Asp-154 is a Mg(2+) binding site. His-155 (proton acceptor) is an active-site residue. A run of 8 helical transmembrane segments spans residues 156 to 176 (GCDSLSTVFVVLGTCIAVQLG), 180 to 199 (DWMFFCCFAGTFMFYCAHWQ), 210 to 230 (IIDVTEVQIFIIIMHLLAVIG), 246 to 267 (MKLLPALCTVAGTIFSCTNYFR), 286 to 306 (VLSPFLHIGSVITLAVMIYKK), 315 to 334 (HPCLYILTFGFVSAKITNKL), 349 to 363 (TAFIGPALLFLDQYF), and 368 to 388 (DEYIVLWIALIFSFFDLIRYC). Position 158 (Asp-158) interacts with Mg(2+).

Belongs to the CDP-alcohol phosphatidyltransferase class-I family. As to quaternary structure, homodimer. Mg(2+) serves as cofactor. Mn(2+) is required as a cofactor.

The protein resides in the endoplasmic reticulum membrane. The protein localises to the nucleus membrane. It catalyses the reaction CDP-ethanolamine + a 1,2-diacyl-sn-glycerol = a 1,2-diacyl-sn-glycero-3-phosphoethanolamine + CMP + H(+). It carries out the reaction CDP-choline + a 1,2-diacyl-sn-glycerol = a 1,2-diacyl-sn-glycero-3-phosphocholine + CMP + H(+). The enzyme catalyses 1-O-alkyl-2-acyl-sn-glycerol + CDP-choline = a 1-O-alkyl-2-acyl-sn-glycero-3-phosphocholine + CMP + H(+). The catalysed reaction is a 1-O-(1Z-alkenyl)-2-acyl-sn-glycerol + CDP-choline = a 1-O-(1Z-alkenyl)-2-acyl-sn-glycero-3-phosphocholine + CMP + H(+). It catalyses the reaction 1,2-dioctanoyl-sn-glycerol + CDP-choline = 1,2-dioctanoyl-sn-glycero-3-phosphocholine + CMP + H(+). It carries out the reaction 1,2-didecanoyl-sn-glycerol + CDP-choline = 1,2-didecanoyl-sn-glycero-3-phosphocholine + CMP + H(+). The enzyme catalyses CDP-choline + 1,2-di-(9Z-octadecenoyl)-sn-glycerol = 1,2-di-(9Z-octadecenoyl)-sn-glycero-3-phosphocholine + CMP + H(+). The catalysed reaction is 1-hexadecanoyl-2-(9Z-octadecenoyl)-sn-glycerol + CDP-choline = 1-hexadecanoyl-2-(9Z-octadecenoyl)-sn-glycero-3-phosphocholine + CMP + H(+). It catalyses the reaction CDP-ethanolamine + 1,2-di-(9Z-octadecenoyl)-sn-glycerol = 1,2-di-(9Z-octadecenoyl)-sn-glycero-3-phosphoethanolamine + CMP + H(+). It carries out the reaction 1-hexadecanoyl-2-(9Z-octadecenoyl)-sn-glycerol + CDP-ethanolamine = 1-hexadecanoyl-2-(9Z-octadecenoyl)-sn-glycero-3-phosphoethanolamine + CMP + H(+). The enzyme catalyses 1-hexadecanoyl-2-(4Z,7Z,10Z,13Z,16Z,19Z-docosahexaenoyl)-sn-glycerol + CDP-choline = 1-hexadecanoyl-2-(4Z,7Z,10Z,13Z,16Z,19Z-docosahexaenoyl)-sn-glycero-3-phosphocholine + CMP + H(+). The catalysed reaction is 1,2-di-(9Z-hexadecenoyl)-sn-glycerol + CDP-choline = 1,2-di-(9Z-hexadecenoyl)-sn-glycero-3-phosphocholine + CMP + H(+). It catalyses the reaction 1,2-di-(9Z-hexadecenoyl)-sn-glycerol + CDP-ethanolamine = 1,2-di-(9Z-hexadecenoyl)-sn-glycero-3-phosphoethanolamine + CMP + H(+). It carries out the reaction 1-O-hexadecyl-2-acetyl-sn-glycerol + CDP-choline = 1-O-hexadecyl-2-acetyl-sn-glycero-3-phosphocholine + CMP + H(+). The enzyme catalyses 1-O-hexadecyl-2-(5Z,8Z,11Z,14Z-eicosatetraenoyl)-sn-glycerol + CDP-choline = 1-O-hexadecyl-2-(5Z,8Z,11Z,14Z)-eicosatetraenoyl-sn-glycero-3-phosphocholine + CMP + H(+). The protein operates within phospholipid metabolism; phosphatidylethanolamine biosynthesis; phosphatidylethanolamine from ethanolamine: step 3/3. It participates in phospholipid metabolism; phosphatidylcholine biosynthesis; phosphatidylcholine from phosphocholine: step 2/2. In terms of biological role, catalyzes both phosphatidylcholine and phosphatidylethanolamine biosynthesis from CDP-choline and CDP-ethanolamine, respectively. Involved in protein-dependent process of phospholipid transport to distribute phosphatidyl choline to the lumenal surface. Has a higher cholinephosphotransferase activity than ethanolaminephosphotransferase activity. The sequence is that of Choline/ethanolaminephosphotransferase 1 from Mus musculus (Mouse).